Reading from the N-terminus, the 470-residue chain is Annexin C1 (470 aa).

Residues M1–G143 are disordered. The span at Q15–A34 shows a compositional bias: low complexity. A compositionally biased stretch (pro residues) spans P82–A92. Low complexity-rich tracts occupy residues P93–P110 and G128–P138. Annexin repeat units lie at residues Y161–L232, G233–S304, Q316–R388, and D395–E468.

Belongs to the annexin family.

In terms of biological role, does not appear to play a major role in virulence. May play a role in titan cell formation. The sequence is that of Annexin C1 from Cryptococcus neoformans var. grubii serotype A (strain H99 / ATCC 208821 / CBS 10515 / FGSC 9487) (Filobasidiella neoformans var. grubii).